A 444-amino-acid polypeptide reads, in one-letter code: Bifunctional enolase 2/transcriptional activator (444 aa).

His-163 and Glu-172 together coordinate substrate. The active-site Proton donor is Glu-215. Mg(2+) contacts are provided by Asp-250, Glu-300, and Asp-327. Residues Glu-300 and Asp-327 each coordinate substrate. Lys-352 serves as the catalytic Proton acceptor. Substrate is bound by residues 379-382 (SHRS) and Lys-403.

This sequence belongs to the enolase family. In terms of assembly, homodimer. Mg(2+) is required as a cofactor.

It is found in the cytoplasm. The protein resides in the cytosol. It localises to the nucleus. Its subcellular location is the mitochondrion outer membrane. It carries out the reaction (2R)-2-phosphoglycerate = phosphoenolpyruvate + H2O. The protein operates within carbohydrate degradation; glycolysis; pyruvate from D-glyceraldehyde 3-phosphate: step 4/5. In terms of biological role, multifunctional enzyme that acts as an enolase involved in the metabolism and as a positive regulator of cold-responsive gene transcription. Binds to the cis-element the gene promoter of STZ/ZAT10, a zinc finger transcriptional repressor. This Arabidopsis thaliana (Mouse-ear cress) protein is Bifunctional enolase 2/transcriptional activator (ENO2).